The following is an 83-amino-acid chain: Mitochondrial import inner membrane translocase subunit Tim8 (83 aa).

Residues C35 to C60 carry the Twin CX3C motif motif. 2 disulfide bridges follow: C35–C60 and C39–C56.

Belongs to the small Tim family. In terms of assembly, heterohexamer; composed of 3 copies of ddp-1/tim-8 and 3 copies of tin-13/tim-13, named soluble 70 kDa complex. Associates with the TIM22 complex, whose core is composed of tim-22.

The protein localises to the mitochondrion inner membrane. Mitochondrial intermembrane chaperone that participates in the import and insertion of some multi-pass transmembrane proteins into the mitochondrial inner membrane. Also required for the transfer of beta-barrel precursors from the TOM complex to the sorting and assembly machinery (SAM complex) of the outer membrane. Acts as a chaperone-like protein that protects the hydrophobic precursors from aggregation and guide them through the mitochondrial intermembrane space. The ddp-1/tim-8-tim-13 complex mediates the import of some proteins while the predominant tim-9/tin-9.1-tim-10/tin-10 70 kDa complex mediates the import of much more proteins. In Caenorhabditis briggsae, this protein is Mitochondrial import inner membrane translocase subunit Tim8.